Consider the following 582-residue polypeptide: 2-succinyl-5-enolpyruvyl-6-hydroxy-3-cyclohexene-1-carboxylate synthase (582 aa).

This sequence belongs to the TPP enzyme family. MenD subfamily. Homodimer. Requires Mg(2+) as cofactor. It depends on Mn(2+) as a cofactor. Thiamine diphosphate serves as cofactor.

The catalysed reaction is isochorismate + 2-oxoglutarate + H(+) = 5-enolpyruvoyl-6-hydroxy-2-succinyl-cyclohex-3-ene-1-carboxylate + CO2. It participates in quinol/quinone metabolism; 1,4-dihydroxy-2-naphthoate biosynthesis; 1,4-dihydroxy-2-naphthoate from chorismate: step 2/7. It functions in the pathway cofactor biosynthesis; phylloquinone biosynthesis. Its function is as follows. Catalyzes the thiamine diphosphate-dependent decarboxylation of 2-oxoglutarate and the subsequent addition of the resulting succinic semialdehyde-thiamine pyrophosphate anion to isochorismate to yield 2-succinyl-5-enolpyruvyl-6-hydroxy-3-cyclohexene-1-carboxylate (SEPHCHC). In Prochlorococcus marinus (strain MIT 9303), this protein is 2-succinyl-5-enolpyruvyl-6-hydroxy-3-cyclohexene-1-carboxylate synthase.